We begin with the raw amino-acid sequence, 279 residues long: Arabinooligosaccharides transport system permease protein AraQ (279 aa).

The next 6 membrane-spanning stretches (helical) occupy residues 8–28 (ILSW…VFPL), 79–99 (VWIS…VGYA), 110–130 (FFFL…MLPL), 140–160 (VNTY…VFFF), 184–204 (GIFF…MAIL), and 245–265 (ILLA…IFFQ). In terms of domain architecture, ABC transmembrane type-1 spans 75-264 (FGNSVWISIV…VPIVILFIFF (190 aa)).

This sequence belongs to the binding-protein-dependent transport system permease family. MalFG subfamily. As to quaternary structure, the complex is composed of two ATP-binding proteins (MsmX), two transmembrane proteins (AraP and AraQ) and a solute-binding protein (AraN).

It is found in the cell membrane. Part of the ABC transporter complex AraNPQ involved in the uptake of arabinooligosaccharides. Responsible for the translocation of the substrate across the membrane. This is Arabinooligosaccharides transport system permease protein AraQ (araQ) from Halalkalibacterium halodurans (strain ATCC BAA-125 / DSM 18197 / FERM 7344 / JCM 9153 / C-125) (Bacillus halodurans).